The chain runs to 372 residues: MEPEVKIERRKTRQVMVGNVPVGGDAPISVQSMTNSETCDVDATVGQIRRLQDAGVDIVRVSVPSMEAAEAFGKIRKQVDVPLVADIHYDYKIALAVAEQGVDCLRINPGNIGREDRIKAVIQCAKDKGLPIRIGVNAGSLEKELQRKYGEPTSDALVESALRHADILDRYDFQNFKVSVKASNVFMTLQAYRKLSSQLEQPLHLGVTEAGTFRSGTVKSAVALGALLMEGIGDTIRVSLAADPVEEVRVGFDILKSLNLRKKGVNIIACPSCSRQNFDVIKTVNELEARLEDINESVDLAVIGCLVNGPGEAREVDVGLTGGTPNNLAYRDGEKSHHITADDLVDELERMVRAKVKKQREDEEKGIIARSE.

The [4Fe-4S] cluster site is built by C270, C273, C305, and E312.

It belongs to the IspG family. [4Fe-4S] cluster serves as cofactor.

The enzyme catalyses (2E)-4-hydroxy-3-methylbut-2-enyl diphosphate + oxidized [flavodoxin] + H2O + 2 H(+) = 2-C-methyl-D-erythritol 2,4-cyclic diphosphate + reduced [flavodoxin]. The protein operates within isoprenoid biosynthesis; isopentenyl diphosphate biosynthesis via DXP pathway; isopentenyl diphosphate from 1-deoxy-D-xylulose 5-phosphate: step 5/6. Its function is as follows. Converts 2C-methyl-D-erythritol 2,4-cyclodiphosphate (ME-2,4cPP) into 1-hydroxy-2-methyl-2-(E)-butenyl 4-diphosphate. This is 4-hydroxy-3-methylbut-2-en-1-yl diphosphate synthase (flavodoxin) from Alcanivorax borkumensis (strain ATCC 700651 / DSM 11573 / NCIMB 13689 / SK2).